The sequence spans 837 residues: Protein translocase subunit SecA 1 (837 aa).

ATP contacts are provided by residues Gln-85, 103 to 107, and Asp-492; that span reads GEGKT. Over residues 787–806 the composition is skewed to basic and acidic residues; sequence QEVAKGEAVHPKEDGEEPKK. Positions 787-813 are disordered; the sequence is QEVAKGEAVHPKEDGEEPKKKPIRKAV. 4 residues coordinate Zn(2+): Cys-821, Cys-823, Cys-832, and Cys-833.

It belongs to the SecA family. In terms of assembly, monomer and homodimer. Part of the essential Sec protein translocation apparatus which comprises SecA, SecYEG and auxiliary proteins SecDF. Other proteins may also be involved. Zn(2+) serves as cofactor.

Its subcellular location is the cell membrane. The protein localises to the cytoplasm. The catalysed reaction is ATP + H2O + cellular proteinSide 1 = ADP + phosphate + cellular proteinSide 2.. Part of the Sec protein translocase complex. Interacts with the SecYEG preprotein conducting channel. Has a central role in coupling the hydrolysis of ATP to the transfer of proteins into and across the cell membrane, serving as an ATP-driven molecular motor driving the stepwise translocation of polypeptide chains across the membrane. In Geobacillus thermodenitrificans (strain NG80-2), this protein is Protein translocase subunit SecA 1.